A 408-amino-acid chain; its full sequence is Dihydrolipoyllysine-residue acetyltransferase component of pyruvate dehydrogenase complex (408 aa).

The Lipoyl-binding domain maps to 2-78; that stretch reads PIKILMPALS…PVNSLIAVLS (77 aa). At K43 the chain carries N6-lipoyllysine. One can recognise a Peripheral subunit-binding (PSBD) domain in the interval 128 to 165; that stretch reads FASPLAKRLAKIGDIRLENVQGSGPHGRIVKQDILSYD. The active site involves H381.

The protein belongs to the 2-oxoacid dehydrogenase family. In terms of assembly, forms a 24-polypeptide structural core with octahedral symmetry. (R)-lipoate is required as a cofactor.

It catalyses the reaction N(6)-[(R)-dihydrolipoyl]-L-lysyl-[protein] + acetyl-CoA = N(6)-[(R)-S(8)-acetyldihydrolipoyl]-L-lysyl-[protein] + CoA. Its function is as follows. The pyruvate dehydrogenase complex catalyzes the overall conversion of pyruvate to acetyl-CoA and CO(2). It contains multiple copies of three enzymatic components: pyruvate dehydrogenase (E1), dihydrolipoamide acetyltransferase (E2) and lipoamide dehydrogenase (E3). This Rickettsia prowazekii (strain Madrid E) protein is Dihydrolipoyllysine-residue acetyltransferase component of pyruvate dehydrogenase complex (pdhC).